Here is a 1003-residue protein sequence, read N- to C-terminus: Alpha-1,4 glucan phosphorylase L isozyme, chloroplastic/amyloplastic (1003 aa).

Residues 1 to 64 (MASMTMRFHP…RRRSAFSVKC (64 aa)) constitute a chloroplast transit peptide. 2 disordered regions span residues 71–91 (KQKV…SSFA) and 526–593 (SSEE…KKLP). A compositionally biased stretch (acidic residues) spans 537–553 (GEEEETSKEGGEEEEEK). The span at 569 to 580 (EVEKAIAEKDGT) shows a compositional bias: basic and acidic residues. Lys-849 is subject to N6-(pyridoxal phosphate)lysine.

This sequence belongs to the glycogen phosphorylase family. Pyridoxal 5'-phosphate serves as cofactor. Found predominantly in cotyledons and early seed coat.

It localises to the plastid. It is found in the chloroplast. Its subcellular location is the amyloplast. It catalyses the reaction [(1-&gt;4)-alpha-D-glucosyl](n) + phosphate = [(1-&gt;4)-alpha-D-glucosyl](n-1) + alpha-D-glucose 1-phosphate. In terms of biological role, phosphorylase is an important allosteric enzyme in carbohydrate metabolism. Enzymes from different sources differ in their regulatory mechanisms and in their natural substrates. However, all known phosphorylases share catalytic and structural properties. Functionally, the L isoform exhibits higher affinity for unbranched substrates such as glucan-like amylose and maltodextrin. The chain is Alpha-1,4 glucan phosphorylase L isozyme, chloroplastic/amyloplastic (PHO1) from Vicia faba (Broad bean).